The chain runs to 179 residues: Sperm surface protein Sp17 (179 aa).

Residues 72-109 (HAFKDEPPEKSETQKIQPEKVAIEKETMPQETVKEKET) show a composition bias toward basic and acidic residues. Disordered stretches follow at residues 72–138 (HAFK…EGLL) and 159–179 (TRKEYLKKRDSTDETADENNE). Residues 116-135 (EPTEEPQKEEEEEEDEEDLE) show a composition bias toward acidic residues. Positions 143 to 172 (MQDAAVKIQAVFRGHKTRKEYLKKRDSTDE) constitute an IQ domain. Residues 161–170 (KEYLKKRDST) are compositionally biased toward basic and acidic residues.

As to quaternary structure, homodimer. May interact with ROPN1. Testis- and sperm-specific.

The protein resides in the membrane. Functionally, sperm surface zona pellucida binding protein. Helps to bind spermatozoa to the zona pellucida with high affinity. Might function in binding zona pellucida and carbohydrates. This is Sperm surface protein Sp17 (SPA17) from Monodelphis domestica (Gray short-tailed opossum).